We begin with the raw amino-acid sequence, 276 residues long: Sulfur carrier protein FdhD (276 aa).

Cys122 functions as the Cysteine persulfide intermediate in the catalytic mechanism. 259–264 (FCRRGR) serves as a coordination point for Mo-bis(molybdopterin guanine dinucleotide).

It belongs to the FdhD family.

The protein resides in the cytoplasm. Required for formate dehydrogenase (FDH) activity. Acts as a sulfur carrier protein that transfers sulfur from IscS to the molybdenum cofactor prior to its insertion into FDH. In Proteus mirabilis (strain HI4320), this protein is Sulfur carrier protein FdhD.